Here is a 517-residue protein sequence, read N- to C-terminus: DNA relaxase MbeA (517 aa).

Y19 serves as the catalytic O-(5'-phospho-DNA)-tyrosine intermediate. 3 residues coordinate a divalent metal cation: H97, E104, and N106. Disordered stretches follow at residues 281–310, 380–405, and 496–517; these read YSPV…QEGR, PSVR…VTQS, and SLER…SLGW. The segment covering 297-310 has biased composition (basic and acidic residues); the sequence is GRGERGDDAAQEGR. Residues 496-510 show a composition bias toward basic and acidic residues; that stretch reads SLERERQPEIQERTL.

This sequence to E.coli MbaA and MbkA. Interacts with MbeB and MbeC to form the relaxosome. Mn(2+) is required as a cofactor. Requires Co(2+) as cofactor. It depends on Ni(2+) as a cofactor.

It catalyses the reaction ATP-independent breakage of single-stranded DNA, followed by passage and rejoining.. Functionally, relaxase involved in plasmid ColE1 conjugative mobilization and is thus essential to promote the specific transfer of the plasmid during conjugation. First catalyzes the specific cleavage of one of the DNA strands at oriT, forming a covalent 5'-phosphotyrosine intermediate. The nic site corresponds to 5'-(1469)CTGG/CTTA(1462)-3' in the cleaved strand. The cleaved strand is then transferred through the dedicated type IV secretion apparatus. MbeA remains covalently linked at the 5' end of the strand, and once in the recipient cell, it probably catalyzes the rejoining of the two ends of the strand, re-forming the circular plasmid DNA. Is functional in vitro without a requirement for the conjugative accessory proteins. The polypeptide is DNA relaxase MbeA (mbeA) (Escherichia coli).